The sequence spans 196 residues: MKPFVVFVLGGPGAGKGTQCERIVQKYGYTHLSAGDLLRDERKKPDSQYGELIESYIRDGRIVPVEITISLLQRAMEQTMALDGNKHKFLIDGFPRNEDNLQGWERTMNGKADVSFVLFFDCDNETCIERCLERGKSSGRSDDNRESLEKRIQTYLQSTRPIIDLYEKTGKVKKVDASKSVDEVFTKVQDIFDREG.

ATP is bound at residue 13–18 (GAGKGT). The segment at 33–63 (SAGDLLRDERKKPDSQYGELIESYIRDGRIV) is NMP. A ribonucleoside 5'-phosphate is bound by residues R39, 61-63 (RIV), and 93-96 (GFPR). Residue N100 coordinates CMP. The interval 133–143 (ERGKSSGRSDD) is LID. R134 contributes to the ATP binding site. Residues R140 and R151 each contribute to the a ribonucleoside 5'-phosphate site. K179 serves as a coordination point for ATP.

This sequence belongs to the adenylate kinase family. UMP-CMP kinase subfamily. Monomer. Mg(2+) serves as cofactor.

The protein localises to the cytoplasm. It localises to the nucleus. It carries out the reaction CMP + ATP = CDP + ADP. It catalyses the reaction dCMP + ATP = dCDP + ADP. The enzyme catalyses UMP + ATP = UDP + ADP. The catalysed reaction is a 2'-deoxyribonucleoside 5'-diphosphate + ATP = a 2'-deoxyribonucleoside 5'-triphosphate + ADP. It carries out the reaction a ribonucleoside 5'-diphosphate + ATP = a ribonucleoside 5'-triphosphate + ADP. Its function is as follows. Catalyzes the phosphorylation of pyrimidine nucleoside monophosphates at the expense of ATP. Plays an important role in de novo pyrimidine nucleotide biosynthesis. Has preference for UMP and CMP as phosphate acceptors. Also displays broad nucleoside diphosphate kinase activity. This Xenopus tropicalis (Western clawed frog) protein is UMP-CMP kinase (cmpk1).